Reading from the N-terminus, the 401-residue chain is Alternative oxidase, mitochondrial (401 aa).

A disordered region spans residues 53–81 (KRASLSLQPSVREAEKSQGPVVGSEGRGV). The helical transmembrane segment at 184–204 (LFRIILLESIAGVPGMVGGTL) threads the bilayer. Glutamate 191, glutamate 230, and histidine 233 together coordinate Fe cation. The chain crosses the membrane as a helical span at residues 249-269 (ALVLAAQGVFYNAFFLTYLIS). The Fe cation site is built by glutamate 281, glutamate 282, glutamate 335, and histidine 338.

Belongs to the alternative oxidase family. Fe cation serves as cofactor.

The protein localises to the mitochondrion inner membrane. Catalyzes cyanide-resistant oxygen consumption. May increase respiration when the cytochrome respiratory pathway is restricted, or in response to low temperatures. The protein is Alternative oxidase, mitochondrial (AOX1) of Cryptococcus neoformans var. grubii serotype A (strain H99 / ATCC 208821 / CBS 10515 / FGSC 9487) (Filobasidiella neoformans var. grubii).